The following is a 337-amino-acid chain: UbiA prenyltransferase domain-containing protein 1 (337 aa).

Ala-2 carries the N-acetylalanine modification. Transmembrane regions (helical) follow at residues 82–102 (LLVGCAVAVLAVHGAGNLVNT), 133–153 (FGVFLYTLGCVCAACLYCLSP), 159–179 (LALIYFGGLSGSFLYTGGIGF), 187–207 (LVILITFGPLAVMFAYAVQVG), 208–228 (SLAVFPLVYAIPLALSTEAVL), 244–266 (IVTLAILIGPTLSYVLYNTLLFL), 276–296 (THCSISLALPLLTVPMAFSLE), and 314–334 (LNLLLGLFYVFGIILAPAGSL).

It belongs to the UbiA prenyltransferase family. Interacts with HMGCR and SOAT1.

The protein localises to the endoplasmic reticulum membrane. The protein resides in the golgi apparatus membrane. It localises to the mitochondrion membrane. The catalysed reaction is menadiol + (2E,6E,10E)-geranylgeranyl diphosphate = menaquinol-4 + diphosphate. It carries out the reaction all-trans-decaprenyl diphosphate + 4-hydroxybenzoate = 4-hydroxy-3-(all-trans-decaprenyl)benzoate + diphosphate. Its pathway is quinol/quinone metabolism; menaquinone biosynthesis. It participates in cofactor biosynthesis; ubiquinone biosynthesis. Functionally, prenyltransferase that mediates the formation of menaquinone-4 (MK-4) and coenzyme Q10. MK-4 is a vitamin K2 isoform required for endothelial cell development. Mediates the conversion of phylloquinone (PK) into MK-4, probably by cleaving the side chain of phylloquinone (PK) to release 2-methyl-1,4-naphthoquinone (menadione; K3) and then prenylating it with geranylgeranyl pyrophosphate (GGPP) to form MK-4. Also plays a role in cardiovascular development independently of MK-4 biosynthesis, by acting as a coenzyme Q10 biosynthetic enzyme: coenzyme Q10, also named ubiquinone, plays an important antioxidant role in the cardiovascular system. Mediates biosynthesis of coenzyme Q10 in the Golgi membrane, leading to protect cardiovascular tissues from NOS3/eNOS-dependent oxidative stress. In Ailuropoda melanoleuca (Giant panda), this protein is UbiA prenyltransferase domain-containing protein 1 (UBIAD1).